The following is a 232-amino-acid chain: Small ribosomal subunit protein uS2 (232 aa).

This sequence belongs to the universal ribosomal protein uS2 family.

The polypeptide is Small ribosomal subunit protein uS2 (Alkaliphilus oremlandii (strain OhILAs) (Clostridium oremlandii (strain OhILAs))).